Consider the following 487-residue polypeptide: Protein FAM221B (487 aa).

Polar residues-rich tracts occupy residues 1–13 and 36–48; these read MEANKTTEGPQDT and HETPLQPSSSQKH. 2 disordered regions span residues 1 to 103 and 132 to 289; these read MEAN…QSVT and QLSP…VTSR. Residues 81 to 103 are compositionally biased toward low complexity; that stretch reads PPVKSSSSGLLSLPPQLSPQSVT. Composition is skewed to basic and acidic residues over residues 227–236 and 243–253; these read ESEHFPKHSF and AKEDESTKEGE. Phosphoserine is present on serine 248.

It belongs to the FAM221 family.

The chain is Protein FAM221B (Fam221b) from Mus musculus (Mouse).